Reading from the N-terminus, the 296-residue chain is Remorin 4.1 (296 aa).

Disordered regions lie at residues 1–78, 121–142, and 242–266; these read MLTL…SGEN, TRIGENDDVGDHGQVPEEDSNP, and EKTQNKVAKAQRKAEERRATAEGKR. The span at 21–39 shows a compositional bias: basic and acidic residues; that stretch reads ASDRRDETPSSEIVVRDIH. Composition is skewed to polar residues over residues 41–53 and 62–78; these read MTTTTELTRPQQR and PSRSIAFSDGTTSSGEN. 2 stretches are compositionally biased toward basic and acidic residues: residues 121-135 and 253-266; these read TRIGENDDVGDHGQV and RKAEERRATAEGKR. Residues 226–261 adopt a coiled-coil conformation; it reads MKKIERKLEDRRAKAMEKTQNKVAKAQRKAEERRAT.

This sequence belongs to the remorin family. In terms of assembly, forms homodimer and heterodimer with REM4.2. Interacts with KIN11. Phosphorylated by KIN11. In terms of processing, probably ubiquitinated and degraded by the 26S proteasome pathway. Predominantly detected in bud, stem, root, flower, silique, and leaves, and enhanced dramatically in senescence leaf.

It localises to the cell membrane. Functionally, collaborates with REM4.2 to positively regulate the BCTV and BSCTV susceptibility. In Arabidopsis thaliana (Mouse-ear cress), this protein is Remorin 4.1.